Consider the following 276-residue polypeptide: Insulin-induced gene 1 protein (276 aa).

Disordered stretches follow at residues 1 to 26 (MPRLDDHLWRGPCAKGTKHRSHPRAS) and 49 to 73 (AAHGALGTDPAHGPQSAGVGGQGSS). The Cytoplasmic portion of the chain corresponds to 1–83 (MPRLDDHLWR…SHVNSWHHHL (83 aa)). Basic residues predominate over residues 16–25 (GTKHRSHPRA). A helical membrane pass occupies residues 84-106 (VQRSLVLFSVGVVLALVLNLLQV). Over 107–125 (QRNVTLFPDEVIATIFSSA) the chain is Extracellular. A helical membrane pass occupies residues 126–143 (WWVPPCCGTAAAVVGLLY). Residues 144-158 (PCIDSHLGEPHKFKR) lie on the Cytoplasmic side of the membrane. Glycyl lysine isopeptide (Lys-Gly) (interchain with G-Cter in ubiquitin) cross-links involve residues K155 and K157. A helical transmembrane segment spans residues 159–181 (EWASVMRCVAVFVGINHASAKLD). At 182–184 (FAN) the chain is on the extracellular side. Residues 185 to 203 (NVQLSLTLAALSLGLWWTF) traverse the membrane as a helical segment. At 204 to 208 (DRSRS) the chain is on the cytoplasmic side. Position 206 is a phosphoserine (S206). Residues 209–230 (GLGLGITIAFLATLITQLLVYN) traverse the membrane as a helical segment. The Extracellular segment spans residues 231 to 244 (GVYQYTSPDFLYIR). A helical membrane pass occupies residues 245 to 262 (SWLPCIFFSGGVTVGNIG). At 263 to 276 (RQLAMGVPEKPHSD) the chain is on the cytoplasmic side. Positions 270–276 (PEKPHSD) match the KxHxx motif.

The protein belongs to the INSIG family. As to quaternary structure, interacts with SCAP; interaction is direct and only takes place in the presence of sterols; it prevents interaction between SCAP and the coat protein complex II (COPII). Associates with the SCAP-SREBP complex (composed of SCAP and SREBF1/SREBP1 or SREBF2/SREBP2); association is mediated via its interaction with SCAP and only takes place in the presence of sterols. Interaction with SCAP is mutually exclusive with PAQR3. Interacts with HMGCR (via its SSD); the interaction, accelerated by sterols, leads to the recruitment of HMGCR to AMFR/gp78 for its ubiquitination by the sterol-mediated ERAD pathway. Interacts with AMFR/gp78 (via its membrane domain); the interaction recruits HMCR at the ER membrane for its ubiquitination and degradation by the sterol-mediated ERAD pathway. Interacts with SOAT2/ACAT2; leading to promote recruitment of AMFR/gp78 and subsequent ubiquitination of SOAT2/ACAT2. Interacts with RNF139. Interacts with RNF145. In terms of processing, phosphorylation at Ser-206 by PCK1 reduces binding to oxysterol, disrupting the interaction between INSIG1 and SCAP, thereby promoting nuclear translocation of SREBP proteins (SREBF1/SREBP1 or SREBF2/SREBP2) and subsequent transcription of downstream lipogenesis-related genes. Post-translationally, ubiquitinated by AMFR/gp78 in response to sterol deprivation, leading to its degradation: when the SCAP-SREBP complex becomes dissociated from INSIG1, INSIG1 is then ubiquitinated and degraded in proteasomes. Although ubiquitination is required for rapid INSIG1 degradation, it is not required for release of the SCAP-SREBP complex. Ubiquitinated by RNF139.

The protein localises to the endoplasmic reticulum membrane. In terms of biological role, oxysterol-binding protein that mediates feedback control of cholesterol synthesis by controlling both endoplasmic reticulum to Golgi transport of SCAP and degradation of HMGCR. Acts as a negative regulator of cholesterol biosynthesis by mediating the retention of the SCAP-SREBP complex in the endoplasmic reticulum, thereby blocking the processing of sterol regulatory element-binding proteins (SREBPs) SREBF1/SREBP1 and SREBF2/SREBP2. Binds oxysterol, including 25-hydroxycholesterol, regulating interaction with SCAP and retention of the SCAP-SREBP complex in the endoplasmic reticulum. In presence of oxysterol, interacts with SCAP, retaining the SCAP-SREBP complex in the endoplasmic reticulum, thereby preventing SCAP from escorting SREBF1/SREBP1 and SREBF2/SREBP2 to the Golgi. Sterol deprivation or phosphorylation by PCK1 reduce oxysterol-binding, disrupting the interaction between INSIG1 and SCAP, thereby promoting Golgi transport of the SCAP-SREBP complex, followed by processing and nuclear translocation of SREBF1/SREBP1 and SREBF2/SREBP2. Also regulates cholesterol synthesis by regulating degradation of HMGCR: initiates the sterol-mediated ubiquitin-mediated endoplasmic reticulum-associated degradation (ERAD) of HMGCR via recruitment of the reductase to the ubiquitin ligases AMFR/gp78 and/or RNF139. Also regulates degradation of SOAT2/ACAT2 when the lipid levels are low: initiates the ubiquitin-mediated degradation of SOAT2/ACAT2 via recruitment of the ubiquitin ligases AMFR/gp78. This Bos taurus (Bovine) protein is Insulin-induced gene 1 protein.